A 72-amino-acid chain; its full sequence is MAKDDVIEIEGTIKETLPNAMFKVELENGHEILAHVSGKIRMHYIRILPGDKVTVEMSPYDLTKGRITYRFK.

The S1-like domain maps to 1-72 (MAKDDVIEIE…TKGRITYRFK (72 aa)).

It belongs to the IF-1 family. Component of the 30S ribosomal translation pre-initiation complex which assembles on the 30S ribosome in the order IF-2 and IF-3, IF-1 and N-formylmethionyl-tRNA(fMet); mRNA recruitment can occur at any time during PIC assembly.

The protein resides in the cytoplasm. Functionally, one of the essential components for the initiation of protein synthesis. Stabilizes the binding of IF-2 and IF-3 on the 30S subunit to which N-formylmethionyl-tRNA(fMet) subsequently binds. Helps modulate mRNA selection, yielding the 30S pre-initiation complex (PIC). Upon addition of the 50S ribosomal subunit IF-1, IF-2 and IF-3 are released leaving the mature 70S translation initiation complex. This chain is Translation initiation factor IF-1, found in Ligilactobacillus salivarius (strain UCC118) (Lactobacillus salivarius).